Consider the following 175-residue polypeptide: Peptide methionine sulfoxide reductase MsrA (175 aa).

The active site involves Cys-10.

Belongs to the MsrA Met sulfoxide reductase family.

The catalysed reaction is L-methionyl-[protein] + [thioredoxin]-disulfide + H2O = L-methionyl-(S)-S-oxide-[protein] + [thioredoxin]-dithiol. The enzyme catalyses [thioredoxin]-disulfide + L-methionine + H2O = L-methionine (S)-S-oxide + [thioredoxin]-dithiol. Its function is as follows. Has an important function as a repair enzyme for proteins that have been inactivated by oxidation. Catalyzes the reversible oxidation-reduction of methionine sulfoxide in proteins to methionine. The sequence is that of Peptide methionine sulfoxide reductase MsrA from Clavibacter michiganensis subsp. michiganensis (strain NCPPB 382).